The primary structure comprises 453 residues: Serine/threonine-protein phosphatase 2A 55 kDa regulatory subunit B delta isoform (453 aa).

4 WD repeats span residues 32-71, 97-138, 181-219, and 230-270; these read AEAD…KGRA, EIEE…KRAE, AHTY…RSFN, and ELTE…LCDR. S285 carries the phosphoserine modification. 3 WD repeats span residues 289–327, 344–385, and 420–452; these read EIIS…RPVE, ENDC…DVTL, and DFNK…QDKI. A Phosphotyrosine modification is found at Y305. T308 is subject to Phosphothreonine.

The protein belongs to the phosphatase 2A regulatory subunit B family. As to quaternary structure, PP2A consists of a common heterodimeric core enzyme, composed of a 36 kDa catalytic subunit (subunit C) and a 65 kDa constant regulatory subunit (PR65 or subunit A), that associates with a variety of regulatory subunits. Proteins that associate with the core dimer include three families of regulatory subunits B (the R2/B/PR55/B55, R3/B''/PR72/PR130/PR59 and R5/B'/B56 families), the 48 kDa variable regulatory subunit, viral proteins, and cell signaling molecules. Interacts with IER5.

The protein resides in the cytoplasm. Functionally, substrate-recognition subunit of protein phosphatase 2A (PP2A) that plays a key role in cell cycle by controlling mitosis entry and exit. Involved in chromosome clustering during late mitosis by mediating dephosphorylation of MKI67. The activity of PP2A complexes containing PPP2R2D (PR55-delta) fluctuate during the cell cycle: the activity is high in interphase and low in mitosis. This chain is Serine/threonine-protein phosphatase 2A 55 kDa regulatory subunit B delta isoform, found in Mus musculus (Mouse).